The sequence spans 157 residues: Deoxyuridine 5'-triphosphate nucleotidohydrolase (157 aa).

Substrate contacts are provided by residues 73 to 75 (RSG), Asn-86, and 90 to 92 (TID).

It belongs to the dUTPase family. It depends on Mg(2+) as a cofactor.

It catalyses the reaction dUTP + H2O = dUMP + diphosphate + H(+). It functions in the pathway pyrimidine metabolism; dUMP biosynthesis; dUMP from dCTP (dUTP route): step 2/2. Functionally, this enzyme is involved in nucleotide metabolism: it produces dUMP, the immediate precursor of thymidine nucleotides and it decreases the intracellular concentration of dUTP so that uracil cannot be incorporated into DNA. This chain is Deoxyuridine 5'-triphosphate nucleotidohydrolase, found in Azorhizobium caulinodans (strain ATCC 43989 / DSM 5975 / JCM 20966 / LMG 6465 / NBRC 14845 / NCIMB 13405 / ORS 571).